Reading from the N-terminus, the 203-residue chain is Putative 3-methyladenine DNA glycosylase (203 aa).

The protein belongs to the DNA glycosylase MPG family.

This is Putative 3-methyladenine DNA glycosylase from Staphylococcus saprophyticus subsp. saprophyticus (strain ATCC 15305 / DSM 20229 / NCIMB 8711 / NCTC 7292 / S-41).